Reading from the N-terminus, the 653-residue chain is Amyloid beta A4 precursor protein-binding family B member 1-interacting protein (653 aa).

The segment at 82–141 (NNKSTAPFPPADASNSYHFHPPPMPSIITEDLSLLPPPPEFDPHYPPPPPDPLTEPKTQE) is disordered. The span at 116 to 134 (LPPPPEFDPHYPPPPPDPL) shows a compositional bias: pro residues. Residues 165–253 (KKRIVKVHMI…IHFLEKNEKY (89 aa)) enclose the Ras-associating domain. The 110-residue stretch at 295-404 (VPELEAALYL…WVTGIRIAKY (110 aa)) folds into the PH domain. The span at 462-481 (KHGEANKQEKKSSEVNKPET) shows a compositional bias: basic and acidic residues. Residues 462 to 653 (KHGEANKQEK…ALQKKREPPT (192 aa)) are disordered. Positions 585–604 (PAPPPPPPPPAPAANVPPLP) are enriched in pro residues. Over residues 605-614 (VKKHPPKPPK) the composition is skewed to basic residues.

Belongs to the MRL family.

The protein resides in the cell membrane. Its subcellular location is the cytoplasm. It is found in the cytoskeleton. In terms of biological role, appears to function in the signal transduction from Ras activation to actin cytoskeletal remodeling. The chain is Amyloid beta A4 precursor protein-binding family B member 1-interacting protein (apbb1ip) from Xenopus laevis (African clawed frog).